Reading from the N-terminus, the 166-residue chain is NAD(P)H-quinone oxidoreductase subunit I, chloroplastic (166 aa).

4Fe-4S ferredoxin-type domains follow at residues 55 to 84 and 95 to 124; these read GRIH…VDWK and LNYS…MTEE. Positions 64, 67, 70, 74, 104, 107, 110, and 114 each coordinate [4Fe-4S] cluster.

This sequence belongs to the complex I 23 kDa subunit family. As to quaternary structure, NDH is composed of at least 16 different subunits, 5 of which are encoded in the nucleus. It depends on [4Fe-4S] cluster as a cofactor.

Its subcellular location is the plastid. It localises to the chloroplast thylakoid membrane. The catalysed reaction is a plastoquinone + NADH + (n+1) H(+)(in) = a plastoquinol + NAD(+) + n H(+)(out). It carries out the reaction a plastoquinone + NADPH + (n+1) H(+)(in) = a plastoquinol + NADP(+) + n H(+)(out). NDH shuttles electrons from NAD(P)H:plastoquinone, via FMN and iron-sulfur (Fe-S) centers, to quinones in the photosynthetic chain and possibly in a chloroplast respiratory chain. The immediate electron acceptor for the enzyme in this species is believed to be plastoquinone. Couples the redox reaction to proton translocation, and thus conserves the redox energy in a proton gradient. The sequence is that of NAD(P)H-quinone oxidoreductase subunit I, chloroplastic from Marshallia caespitosa (Barbara's buttons).